The following is a 178-amino-acid chain: Ribosome maturation factor RimM (178 aa).

The PRC barrel domain maps to 94–174; sequence KNEFFWFDLI…RIDVINSFDI (81 aa).

The protein belongs to the RimM family. As to quaternary structure, binds ribosomal protein uS19.

Its subcellular location is the cytoplasm. In terms of biological role, an accessory protein needed during the final step in the assembly of 30S ribosomal subunit, possibly for assembly of the head region. Essential for efficient processing of 16S rRNA. May be needed both before and after RbfA during the maturation of 16S rRNA. It has affinity for free ribosomal 30S subunits but not for 70S ribosomes. This Aliarcobacter butzleri (strain RM4018) (Arcobacter butzleri) protein is Ribosome maturation factor RimM.